Here is a 118-residue protein sequence, read N- to C-terminus: U-scoloptoxin(05)-Cw1a (118 aa).

Positions Met1 to Ala22 are cleaved as a signal peptide.

The protein belongs to the scoloptoxin-05 family. In terms of processing, contains 5 disulfide bonds. As to expression, expressed by the venom gland.

It is found in the secreted. The protein is U-scoloptoxin(05)-Cw1a of Cormocephalus westwoodi (Westwood's green centipede).